A 228-amino-acid polypeptide reads, in one-letter code: Sodium channel regulatory subunit beta-4 (228 aa).

The signal sequence occupies residues 1 to 30 (MSRAGNRGNTQARWLGIGLLGLFLLPMYLS). The Ig-like C2-type domain maps to 31 to 148 (LEVSVGKATT…KDLNNSATIF (118 aa)). Topologically, residues 31–161 (LEVSVGKATT…VDKLEEVDNT (131 aa)) are extracellular. Residues N45, N71, N113, and N142 are each glycosylated (N-linked (GlcNAc...) asparagine). A disulfide bridge links C53 with C131. A helical membrane pass occupies residues 162-182 (VTLIILAVVGGVIGLLVCILL). The Cytoplasmic portion of the chain corresponds to 183-228 (LKKLITFILKKTREKKKECLVSSSGNDNTENGLPGSKAEEKPPTKV). Residues 199 to 228 (KECLVSSSGNDNTENGLPGSKAEEKPPTKV) form a disordered region. Polar residues predominate over residues 203–213 (VSSSGNDNTEN). A compositionally biased stretch (basic and acidic residues) spans 219–228 (KAEEKPPTKV).

It belongs to the sodium channel auxiliary subunit SCN4B (TC 8.A.17) family. As to quaternary structure, a voltage-gated sodium (Nav) channel consists of an ion-conducting pore-forming alpha subunit functional on its own that is regulated by one or more beta subunits. The beta subunit SCN4B is disulfide-linked to the pore-forming alpha subunit. Interacts with SCN1A; regulatory subunit of SCN1A/Nav1.1. Interacts with SCN2A; regulatory subunit of SCN2A/Nav1.2. In terms of processing, contains an interchain disulfide bond with SCN2A. Expressed at a high level in dorsal root ganglia, at a lower level in brain, spinal cord, skeletal muscle and heart.

It localises to the cell membrane. In terms of biological role, regulatory subunit of multiple voltage-gated sodium (Nav) channels directly mediating the depolarization of excitable membranes. Navs, also called VGSCs (voltage-gated sodium channels) or VDSCs (voltage-dependent sodium channels), operate by switching between closed and open conformations depending on the voltage difference across the membrane. In the open conformation they allow Na(+) ions to selectively pass through the pore, along their electrochemical gradient. The influx of Na+ ions provokes membrane depolarization, initiating the propagation of electrical signals throughout cells and tissues. The accessory beta subunits participate in localization and functional modulation of the Nav channels. Modulates the activity of SCN1A/Nav1.1. Modulates the activity of SCN2A/Nav1.2. This chain is Sodium channel regulatory subunit beta-4, found in Rattus norvegicus (Rat).